The chain runs to 745 residues: Phosphoribosylformylglycinamidine synthase subunit PurL (745 aa).

His50 is an active-site residue. The ATP site is built by Tyr53 and Lys92. Residue Glu94 participates in Mg(2+) binding. Substrate contacts are provided by residues 95–98 and Arg117; that span reads SHNH. His96 serves as the catalytic Proton acceptor. Asp118 serves as a coordination point for Mg(2+). Residue Gln241 coordinates substrate. Asp269 lines the Mg(2+) pocket. Residue 313–315 coordinates substrate; sequence ESQ. The ATP site is built by Asp495 and Gly532. Asn533 is a Mg(2+) binding site. Ser535 lines the substrate pocket.

This sequence belongs to the FGAMS family. Monomer. Part of the FGAM synthase complex composed of 1 PurL, 1 PurQ and 2 PurS subunits.

The protein resides in the cytoplasm. It catalyses the reaction N(2)-formyl-N(1)-(5-phospho-beta-D-ribosyl)glycinamide + L-glutamine + ATP + H2O = 2-formamido-N(1)-(5-O-phospho-beta-D-ribosyl)acetamidine + L-glutamate + ADP + phosphate + H(+). It functions in the pathway purine metabolism; IMP biosynthesis via de novo pathway; 5-amino-1-(5-phospho-D-ribosyl)imidazole from N(2)-formyl-N(1)-(5-phospho-D-ribosyl)glycinamide: step 1/2. Functionally, part of the phosphoribosylformylglycinamidine synthase complex involved in the purines biosynthetic pathway. Catalyzes the ATP-dependent conversion of formylglycinamide ribonucleotide (FGAR) and glutamine to yield formylglycinamidine ribonucleotide (FGAM) and glutamate. The FGAM synthase complex is composed of three subunits. PurQ produces an ammonia molecule by converting glutamine to glutamate. PurL transfers the ammonia molecule to FGAR to form FGAM in an ATP-dependent manner. PurS interacts with PurQ and PurL and is thought to assist in the transfer of the ammonia molecule from PurQ to PurL. This Allorhizobium ampelinum (strain ATCC BAA-846 / DSM 112012 / S4) (Agrobacterium vitis (strain S4)) protein is Phosphoribosylformylglycinamidine synthase subunit PurL.